Here is a 179-residue protein sequence, read N- to C-terminus: Natural killer cells antigen CD94 (179 aa).

Topologically, residues 1-10 (MAVSRITRWR) are cytoplasmic. The helical; Signal-anchor for type II membrane protein transmembrane segment at 11-31 (LMSVIFGIKCLFLMVTLGVLL) threads the bilayer. Residues 32 to 179 (INSFTIQNIQ…NRYICKKLPI (148 aa)) are Extracellular-facing. Disulfide bonds link Cys-58–Cys-70, Cys-61–Cys-72, Cys-89–Cys-174, and Cys-152–Cys-166. The region spanning 68-175 (HQCNCYFISK…CENKNRYICK (108 aa)) is the C-type lectin domain. Asn-93 and Asn-109 each carry an N-linked (GlcNAc...) asparagine glycan.

In terms of assembly, can form disulfide-bonded heterodimer with NKG2 family members KLRC1 and KLRC2. KLRD1-KLRC1 heterodimer interacts with peptide-bound MHC-E-B2M heterotrimeric complex. KLRD1 plays a prominent role in directly interacting with MHC-E. KLRD1-KLRC1 interacts with much higher affinity with peptide-bound MHC-E-B2M than KLRD1-KLRC2. Interacts with the adapter protein TYROBP/DAP12; this interaction is required for cell surface expression and cell activation.

The protein resides in the cell membrane. Functionally, immune receptor involved in self-nonself discrimination. In complex with KLRC1 or KLRC2 on cytotoxic and regulatory lymphocyte subsets, recognizes non-classical major histocompatibility (MHC) class Ib molecule MHC-E loaded with self-peptides derived from the signal sequence of classical MHC class Ia and non-classical MHC class Ib molecules. Enables cytotoxic cells to monitor the expression of MHC class I molecules in healthy cells and to tolerate self. Primarily functions as a ligand binding subunit as it lacks the capacity to signal. KLRD1-KLRC1 acts as an immune inhibitory receptor. Key inhibitory receptor on natural killer (NK) cells that regulates their activation and effector functions. Dominantly counteracts T cell receptor signaling on a subset of memory/effector CD8-positive T cells as part of an antigen-driven response to avoid autoimmunity. On intraepithelial CD8-positive gamma-delta regulatory T cells triggers TGFB1 secretion, which in turn limits the cytotoxic programming of intraepithelial CD8-positive alpha-beta T cells, distinguishing harmless from pathogenic antigens. In MHC-E-rich tumor microenvironment, acts as an immune inhibitory checkpoint and may contribute to progressive loss of effector functions of NK cells and tumor-specific T cells, a state known as cell exhaustion. Upon MHC-E-peptide binding, transmits intracellular signals through KLRC1 immunoreceptor tyrosine-based inhibition motifs (ITIMs) by recruiting INPP5D/SHIP-1 and INPPL1/SHIP-2 tyrosine phosphatases to ITIMs, and ultimately opposing signals transmitted by activating receptors through dephosphorylation of proximal signaling molecules. Its function is as follows. KLRD1-KLRC2 acts as an immune activating receptor. On cytotoxic lymphocyte subsets recognizes MHC-E loaded with signal sequence-derived peptides from non-classical MHC class Ib MHC-G molecules, likely playing a role in the generation and effector functions of adaptive NK cells and in maternal-fetal tolerance during pregnancy. Regulates the effector functions of terminally differentiated cytotoxic lymphocyte subsets, and in particular may play a role in adaptive NK cell response to viral infection. Upon MHC-E-peptide binding, transmits intracellular signals via the adapter protein TYROBP/DAP12, triggering the phosphorylation of proximal signaling molecules and cell activation. This Mus musculus (Mouse) protein is Natural killer cells antigen CD94 (Klrd1).